Consider the following 136-residue polypeptide: UPF0213 protein AHA_3736 (136 aa).

In terms of domain architecture, GIY-YIG spans Ser-17 to Gln-92. The interval Gln-114–Asp-136 is disordered. Residues Glu-124–Asp-136 are compositionally biased toward basic and acidic residues.

Belongs to the UPF0213 family.

This Aeromonas hydrophila subsp. hydrophila (strain ATCC 7966 / DSM 30187 / BCRC 13018 / CCUG 14551 / JCM 1027 / KCTC 2358 / NCIMB 9240 / NCTC 8049) protein is UPF0213 protein AHA_3736.